Consider the following 388-residue polypeptide: Succinate--CoA ligase [ADP-forming] subunit beta (388 aa).

The ATP-grasp domain occupies 9 to 246; the sequence is KDILRQFGVP…FEEEDPAEVL (238 aa). Residues Lys-46, 53-55, Glu-99, Ala-102, and Glu-107 contribute to the ATP site; that span reads GRG. Mg(2+) contacts are provided by Asn-201 and Asp-215. Substrate-binding positions include Asn-266 and 323 to 325; that span reads GIM.

The protein belongs to the succinate/malate CoA ligase beta subunit family. As to quaternary structure, heterotetramer of two alpha and two beta subunits. The cofactor is Mg(2+).

The enzyme catalyses succinate + ATP + CoA = succinyl-CoA + ADP + phosphate. The catalysed reaction is GTP + succinate + CoA = succinyl-CoA + GDP + phosphate. Its pathway is carbohydrate metabolism; tricarboxylic acid cycle; succinate from succinyl-CoA (ligase route): step 1/1. Succinyl-CoA synthetase functions in the citric acid cycle (TCA), coupling the hydrolysis of succinyl-CoA to the synthesis of either ATP or GTP and thus represents the only step of substrate-level phosphorylation in the TCA. The beta subunit provides nucleotide specificity of the enzyme and binds the substrate succinate, while the binding sites for coenzyme A and phosphate are found in the alpha subunit. This is Succinate--CoA ligase [ADP-forming] subunit beta from Verminephrobacter eiseniae (strain EF01-2).